Reading from the N-terminus, the 287-residue chain is Ventral anterior homeobox 1b (287 aa).

The span at M1–Q33 shows a compositional bias: basic and acidic residues. Positions M1 to S55 are disordered. The segment at residues P89–Q148 is a DNA-binding region (homeobox).

It belongs to the EMX homeobox family.

The protein resides in the nucleus. In terms of biological role, involved in ventral eye development. The sequence is that of Ventral anterior homeobox 1b (vax1-b) from Xenopus laevis (African clawed frog).